A 522-amino-acid polypeptide reads, in one-letter code: Serine/threonine-protein kinase pak-2 (522 aa).

Residues 16–29 (ISTPSNFEHRIHAG) enclose the CRIB domain. Positions 183 to 204 (TTTPQLQPKSPSTPQAMRQQPK) are enriched in polar residues. The interval 183-208 (TTTPQLQPKSPSTPQAMRQQPKCTEG) is disordered. Residues 231–482 (LTDYKQIGEG…AKDLLRHPFF (252 aa)) form the Protein kinase domain. Residues 237–245 (IGEGSTGVV) and Lys-260 each bind ATP. The active-site Proton acceptor is the Asp-350.

It belongs to the protein kinase superfamily. STE Ser/Thr protein kinase family. STE20 subfamily. Mg(2+) is required as a cofactor. It depends on Mn(2+) as a cofactor. As to expression, expressed in pharynx, vulva and spermatheca. Unlike other p21-activated kinases, expression is not detected in neurons.

It carries out the reaction L-seryl-[protein] + ATP = O-phospho-L-seryl-[protein] + ADP + H(+). The catalysed reaction is L-threonyl-[protein] + ATP = O-phospho-L-threonyl-[protein] + ADP + H(+). In terms of biological role, serine/threonine-protein kinase which plays a redundant role with pak-1 in embryogenesis but, in contrast to pak-1, is not involved in commissural axon guidance of ventral cord motoneurons or in distal tip cell (DTC) migration. The sequence is that of Serine/threonine-protein kinase pak-2 from Caenorhabditis elegans.